We begin with the raw amino-acid sequence, 150 residues long: 3-hydroxyacyl-[acyl-carrier-protein] dehydratase FabZ (150 aa).

Histidine 54 is a catalytic residue.

This sequence belongs to the thioester dehydratase family. FabZ subfamily.

It localises to the cytoplasm. The enzyme catalyses a (3R)-hydroxyacyl-[ACP] = a (2E)-enoyl-[ACP] + H2O. Its function is as follows. Involved in unsaturated fatty acids biosynthesis. Catalyzes the dehydration of short chain beta-hydroxyacyl-ACPs and long chain saturated and unsaturated beta-hydroxyacyl-ACPs. The polypeptide is 3-hydroxyacyl-[acyl-carrier-protein] dehydratase FabZ (Vibrio atlanticus (strain LGP32) (Vibrio splendidus (strain Mel32))).